The sequence spans 238 residues: uncharacterized protein (238 aa).

Belongs to the HyuE racemase family.

This is an uncharacterized protein from Schizosaccharomyces pombe (strain 972 / ATCC 24843) (Fission yeast).